The primary structure comprises 1121 residues: RecBCD enzyme subunit RecC (1121 aa).

It belongs to the RecC family. As to quaternary structure, heterotrimer of RecB, RecC and RecD. All subunits contribute to DNA-binding.

Functionally, a helicase/nuclease that prepares dsDNA breaks (DSB) for recombinational DNA repair. Binds to DSBs and unwinds DNA via a highly rapid and processive ATP-dependent bidirectional helicase activity. Unwinds dsDNA until it encounters a Chi (crossover hotspot instigator) sequence from the 3' direction. Cuts ssDNA a few nucleotides 3' to the Chi site. The properties and activities of the enzyme are changed at Chi. The Chi-altered holoenzyme produces a long 3'-ssDNA overhang and facilitates RecA-binding to the ssDNA for homologous DNA recombination and repair. Holoenzyme degrades any linearized DNA that is unable to undergo homologous recombination. In the holoenzyme this subunit recognizes the wild-type Chi sequence, and when added to isolated RecB increases its ATP-dependent helicase processivity. This is RecBCD enzyme subunit RecC from Haemophilus influenzae (strain ATCC 51907 / DSM 11121 / KW20 / Rd).